The chain runs to 523 residues: Cytochrome b5 reductase 4 (523 aa).

Positions 54–130 (LIDVTEEELA…LKECLIGRMA (77 aa)) constitute a Cytochrome b5 heme-binding domain. Residues His89 and His112 each contribute to the heme site. A CS domain is found at 167 to 258 (ESHPWYDWFQ…KEPVSWKSLG (92 aa)). The region spanning 275 to 387 (LYYRKCRLAS…SNPQGTFSSF (113 aa)) is the FAD-binding FR-type domain. FAD contacts are provided by residues 367–382 (ENLT…NPQG) and 394–426 (DVFL…KAKL).

The protein belongs to the flavoprotein pyridine nucleotide cytochrome reductase family. FAD serves as cofactor.

The protein resides in the endoplasmic reticulum. The enzyme catalyses 2 Fe(III)-[cytochrome b5] + NADH = 2 Fe(II)-[cytochrome b5] + NAD(+) + H(+). Its function is as follows. NADH-cytochrome b5 reductase involved in endoplasmic reticulum stress response pathway. The sequence is that of Cytochrome b5 reductase 4 (cyb5r4) from Xenopus tropicalis (Western clawed frog).